The sequence spans 67 residues: Toxin Bl-1 (67 aa).

Residues 2–66 (RDGYISQPEN…GIIVDGIKCH (65 aa)) enclose the LCN-type CS-alpha/beta domain. Disulfide bonds link Cys12-Cys65, Cys16-Cys37, Cys23-Cys47, and Cys27-Cys49. Thr67 carries the post-translational modification Threonine amide.

Belongs to the long (4 C-C) scorpion toxin superfamily. Sodium channel inhibitor family. Alpha subfamily. In terms of tissue distribution, expressed by the venom gland.

Its subcellular location is the secreted. Alpha toxins bind voltage-independently at site-3 of sodium channels (Nav) and inhibit the inactivation of the activated channels, thereby blocking neuronal transmission. Is highly toxic to insects (tested on the crickets A.domesticus). This peptide may also be toxic to mammals, since it is similar to alpha-like toxins that are active on both insect and mammalian sodium channels. This Buthacus leptochelys (Egyptian fat-tailed scorpion) protein is Toxin Bl-1.